The following is a 183-amino-acid chain: uncharacterized protein (183 aa).

This sequence belongs to the herpesviridae US1 family.

This is an uncharacterized protein from Human cytomegalovirus (strain AD169) (HHV-5).